A 557-amino-acid chain; its full sequence is Dihydroxy-acid dehydratase (557 aa).

Cys49 is a [2Fe-2S] cluster binding site. Mg(2+) is bound at residue Asp81. Cys122 serves as a coordination point for [2Fe-2S] cluster. The Mg(2+) site is built by Asp123 and Lys124. Lys124 is modified (N6-carboxylysine). Cys194 is a binding site for [2Fe-2S] cluster. Residue Glu446 coordinates Mg(2+). The Proton acceptor role is filled by Ser472.

It belongs to the IlvD/Edd family. Homodimer. The cofactor is [2Fe-2S] cluster. It depends on Mg(2+) as a cofactor.

The enzyme catalyses (2R)-2,3-dihydroxy-3-methylbutanoate = 3-methyl-2-oxobutanoate + H2O. The catalysed reaction is (2R,3R)-2,3-dihydroxy-3-methylpentanoate = (S)-3-methyl-2-oxopentanoate + H2O. The protein operates within amino-acid biosynthesis; L-isoleucine biosynthesis; L-isoleucine from 2-oxobutanoate: step 3/4. It functions in the pathway amino-acid biosynthesis; L-valine biosynthesis; L-valine from pyruvate: step 3/4. Functionally, functions in the biosynthesis of branched-chain amino acids. Catalyzes the dehydration of (2R,3R)-2,3-dihydroxy-3-methylpentanoate (2,3-dihydroxy-3-methylvalerate) into 2-oxo-3-methylpentanoate (2-oxo-3-methylvalerate) and of (2R)-2,3-dihydroxy-3-methylbutanoate (2,3-dihydroxyisovalerate) into 2-oxo-3-methylbutanoate (2-oxoisovalerate), the penultimate precursor to L-isoleucine and L-valine, respectively. The polypeptide is Dihydroxy-acid dehydratase (Prochlorococcus marinus (strain MIT 9215)).